The sequence spans 526 residues: Bifunctional purine biosynthesis protein PurH (526 aa).

In terms of domain architecture, MGS-like spans 1-147 (MSVIKRALIS…KNWKHVAIVT (147 aa)).

This sequence belongs to the PurH family.

It carries out the reaction (6R)-10-formyltetrahydrofolate + 5-amino-1-(5-phospho-beta-D-ribosyl)imidazole-4-carboxamide = 5-formamido-1-(5-phospho-D-ribosyl)imidazole-4-carboxamide + (6S)-5,6,7,8-tetrahydrofolate. The enzyme catalyses IMP + H2O = 5-formamido-1-(5-phospho-D-ribosyl)imidazole-4-carboxamide. The protein operates within purine metabolism; IMP biosynthesis via de novo pathway; 5-formamido-1-(5-phospho-D-ribosyl)imidazole-4-carboxamide from 5-amino-1-(5-phospho-D-ribosyl)imidazole-4-carboxamide (10-formyl THF route): step 1/1. It participates in purine metabolism; IMP biosynthesis via de novo pathway; IMP from 5-formamido-1-(5-phospho-D-ribosyl)imidazole-4-carboxamide: step 1/1. The polypeptide is Bifunctional purine biosynthesis protein PurH (Neisseria gonorrhoeae (strain ATCC 700825 / FA 1090)).